We begin with the raw amino-acid sequence, 760 residues long: Prolyl endopeptidase (760 aa).

Catalysis depends on charge relay system residues serine 609, aspartate 693, and histidine 730.

It belongs to the peptidase S9A family.

It is found in the cytoplasm. The enzyme catalyses Hydrolysis of Pro-|-Xaa &gt;&gt; Ala-|-Xaa in oligopeptides.. Inhibited by chymostatin, Boc-Glu(NHO-Bz)-Pyrrolidide, Z-Pro-L-prolinal dimethyacetal and the peptide H-H-L-P-P-P-V-OH. Cleaves peptide bonds on the C-terminal side of prolyl residues within peptides that are up to approximately 30 amino acids long. This Dictyostelium discoideum (Social amoeba) protein is Prolyl endopeptidase (prep).